A 555-amino-acid chain; its full sequence is Potassium-transporting ATPase potassium-binding subunit (555 aa).

A run of 10 helical transmembrane segments spans residues 2–22 (IWVA…PTGI), 60–80 (QYAL…YFIF), 130–150 (IGIT…VMAF), 173–193 (VFLP…VPQT), 246–266 (MSNI…PFTY), 278–298 (ILFV…TTSE), 374–394 (AGFV…GLMV), 412–432 (LIAV…ALAL), 483–503 (LVMF…AASL), and 525–545 (GIFI…MLVL).

It belongs to the KdpA family. In terms of assembly, the system is composed of three essential subunits: KdpA, KdpB and KdpC.

It is found in the cell membrane. Part of the high-affinity ATP-driven potassium transport (or Kdp) system, which catalyzes the hydrolysis of ATP coupled with the electrogenic transport of potassium into the cytoplasm. This subunit binds the extracellular potassium ions and delivers the ions to the membrane domain of KdpB through an intramembrane tunnel. This is Potassium-transporting ATPase potassium-binding subunit from Bacillus cereus (strain 03BB102).